The chain runs to 333 residues: Glycerol-3-phosphate dehydrogenase [NAD(P)+] (333 aa).

Residues tryptophan 12, lysine 33, and lysine 105 each coordinate NADPH. Residues lysine 105, glycine 136, and serine 138 each contribute to the sn-glycerol 3-phosphate site. Alanine 140 is a binding site for NADPH. Positions 191, 244, 254, 255, and 256 each coordinate sn-glycerol 3-phosphate. Catalysis depends on lysine 191, which acts as the Proton acceptor. Arginine 255 provides a ligand contact to NADPH. The NADPH site is built by valine 279 and glutamate 281.

The protein belongs to the NAD-dependent glycerol-3-phosphate dehydrogenase family.

The protein localises to the cytoplasm. The enzyme catalyses sn-glycerol 3-phosphate + NAD(+) = dihydroxyacetone phosphate + NADH + H(+). The catalysed reaction is sn-glycerol 3-phosphate + NADP(+) = dihydroxyacetone phosphate + NADPH + H(+). It functions in the pathway membrane lipid metabolism; glycerophospholipid metabolism. Functionally, catalyzes the reduction of the glycolytic intermediate dihydroxyacetone phosphate (DHAP) to sn-glycerol 3-phosphate (G3P), the key precursor for phospholipid synthesis. The chain is Glycerol-3-phosphate dehydrogenase [NAD(P)+] from Protochlamydia amoebophila (strain UWE25).